The following is a 220-amino-acid chain: MAAATGTRKKKTPRPGQWKLWLLYTAGFVPAVWTFYLGATGQLGADPVKTFEHLLGLWALRFLILTLLVTPIRDLTGITLLRYRRALGLLAFYYALMHFTTYMVLDQGLNLSAIITDIVRRPFITIGMISLALLVPLALTSNNWSIRKLGRRWSSLHKLVYIAIAGSAVHFLMSVKSWPAEPVIYAAIVAALLLWRLARPYLRTRKPALRPRGEAIALRK.

6 helical membrane-spanning segments follow: residues 20–40 (LWLL…LGAT), 52–72 (EHLL…VTPI), 86–106 (ALGL…MVLD), 122–142 (PFIT…LTSN), 153–173 (WSSL…HFLM), and 175–195 (VKSW…LLLW).

It belongs to the MsrQ family. As to quaternary structure, heterodimer of a catalytic subunit (MsrP) and a heme-binding subunit (MsrQ). It depends on FMN as a cofactor. The cofactor is heme b.

It localises to the cell inner membrane. In terms of biological role, part of the MsrPQ system that repairs oxidized periplasmic proteins containing methionine sulfoxide residues (Met-O), using respiratory chain electrons. Thus protects these proteins from oxidative-stress damage caused by reactive species of oxygen and chlorine generated by the host defense mechanisms. MsrPQ is essential for the maintenance of envelope integrity under bleach stress, rescuing a wide series of structurally unrelated periplasmic proteins from methionine oxidation. MsrQ provides electrons for reduction to the reductase catalytic subunit MsrP, using the quinone pool of the respiratory chain. This is Protein-methionine-sulfoxide reductase heme-binding subunit MsrQ from Brucella abortus (strain S19).